The following is a 689-amino-acid chain: Glycine--tRNA ligase beta subunit (689 aa).

The protein belongs to the class-II aminoacyl-tRNA synthetase family. Tetramer of two alpha and two beta subunits.

The protein localises to the cytoplasm. It carries out the reaction tRNA(Gly) + glycine + ATP = glycyl-tRNA(Gly) + AMP + diphosphate. The polypeptide is Glycine--tRNA ligase beta subunit (Aeromonas salmonicida (strain A449)).